The chain runs to 95 residues: Cell division protein FtsB (95 aa).

Topologically, residues 1–3 (MRL) are cytoplasmic. The chain crosses the membrane as a helical span at residues 4–21 (FILILSAILLLFQYDLWF). Over 22–95 (GKNGYLDYKE…RIAKENKDNR (74 aa)) the chain is Periplasmic. The stretch at 28-62 (DYKETAEEIAMHKAENTKLSQRNQVVAAEIRDLKD) forms a coiled coil.

The protein belongs to the FtsB family. Part of a complex composed of FtsB, FtsL and FtsQ.

It is found in the cell inner membrane. In terms of biological role, essential cell division protein. May link together the upstream cell division proteins, which are predominantly cytoplasmic, with the downstream cell division proteins, which are predominantly periplasmic. This Mannheimia succiniciproducens (strain KCTC 0769BP / MBEL55E) protein is Cell division protein FtsB.